Consider the following 192-residue polypeptide: Peptidyl-tRNA hydrolase (192 aa).

Tyr-18 serves as a coordination point for tRNA. Catalysis depends on His-23, which acts as the Proton acceptor. Residues Phe-69, Asn-71, and Asn-117 each contribute to the tRNA site.

It belongs to the PTH family. As to quaternary structure, monomer.

The protein localises to the cytoplasm. The enzyme catalyses an N-acyl-L-alpha-aminoacyl-tRNA + H2O = an N-acyl-L-amino acid + a tRNA + H(+). Hydrolyzes ribosome-free peptidyl-tRNAs (with 1 or more amino acids incorporated), which drop off the ribosome during protein synthesis, or as a result of ribosome stalling. Its function is as follows. Catalyzes the release of premature peptidyl moieties from peptidyl-tRNA molecules trapped in stalled 50S ribosomal subunits, and thus maintains levels of free tRNAs and 50S ribosomes. In Neisseria meningitidis serogroup A / serotype 4A (strain DSM 15465 / Z2491), this protein is Peptidyl-tRNA hydrolase.